The sequence spans 448 residues: Inositol polyphosphate 5-phosphatase K (448 aa).

Residues 16 to 318 (IHVVTWNVAS…SDHKPVSGTF (303 aa)) form a catalytic region. The interval 318–448 (FDLELKPLVS…DPLGEAQPQI (131 aa)) is required for interaction with GPR78 and PAK1. The required for ruffle localization stretch occupies residues 321–448 (ELKPLVSAPL…DPLGEAQPQI (128 aa)).

The protein belongs to the inositol 1,4,5-trisphosphate 5-phosphatase type II family. In terms of assembly, interacts with GPR78; necessary for INPP5K localization at the endoplasmic reticulum. Interacts with PAK1; competes with GPR78. In terms of tissue distribution, ubiquitously expressed with highest levels in skeletal muscle, heart and kidney.

The protein resides in the endoplasmic reticulum. It localises to the cytoplasm. The catalysed reaction is 1D-myo-inositol 1,4,5-trisphosphate + H2O = 1D-myo-inositol 1,4-bisphosphate + phosphate. The enzyme catalyses 1D-myo-inositol 1,3,4,5-tetrakisphosphate + H2O = 1D-myo-inositol 1,3,4-trisphosphate + phosphate. It carries out the reaction a 1,2-diacyl-sn-glycero-3-phospho-(1D-myo-inositol-4,5-bisphosphate) + H2O = a 1,2-diacyl-sn-glycero-3-phospho-(1D-myo-inositol 4-phosphate) + phosphate. It catalyses the reaction a 1,2-diacyl-sn-glycero-3-phospho-(1D-myo-inositol-3,4,5-trisphosphate) + H2O = a 1,2-diacyl-sn-glycero-3-phospho-(1D-myo-inositol-3,4-bisphosphate) + phosphate. The catalysed reaction is 1,2-dioctanoyl-sn-glycero-3-phospho-(1D-myo-inositol-3,4,5-trisphosphate) + H2O = 1,2-dioctanoyl-sn-glycero-3-phospho-(1D-myo-inositol-3,4-bisphosphate) + phosphate. Inositol 5-phosphatase which acts on inositol 1,4,5-trisphosphate, inositol 1,3,4,5-tetrakisphosphate, phosphatidylinositol 4,5-bisphosphate and phosphatidylinositol 3,4,5-trisphosphate. Has 6-fold higher affinity for phosphatidylinositol 4,5-bisphosphate than for inositol 1,4,5-trisphosphate. Negatively regulates assembly of the actin cytoskeleton. Controls insulin-dependent glucose uptake among inositol 3,4,5-trisphosphate phosphatases; therefore, is the specific regulator for insulin signaling in skeletal muscle. The chain is Inositol polyphosphate 5-phosphatase K from Homo sapiens (Human).